A 226-amino-acid chain; its full sequence is MTLLILLRHGQSVWNQKNLFTGWVDIPLSQQGIQEAIAAGESIKHLPIDCIFTSTLVRSLMTALLAMTNHSSQKVPYIVHEERPDMSRIHSQKEMEQMIPLFQSSALNERMYGELQGKNKQEVAAQFGEEQVKLWRRSYRIAPPQGESLFDTGQRTLPYFQERIFPLLQQGKNIFISAHGNSLRSLIMDLEKLSEEQVLSLELPTGQPIVYEWTGQKFTKHAPSLG.

Substrate-binding positions include 8–15, 21–22, R58, 109–112, K120, 136–137, and 180–181; these read RHGQSVWN, TG, ERMY, RR, and GN. The active-site Tele-phosphohistidine intermediate is H9. E109 acts as the Proton donor/acceptor in catalysis.

The protein belongs to the phosphoglycerate mutase family. BPG-dependent PGAM subfamily.

The enzyme catalyses (2R)-2-phosphoglycerate = (2R)-3-phosphoglycerate. Its pathway is carbohydrate degradation; glycolysis; pyruvate from D-glyceraldehyde 3-phosphate: step 3/5. Functionally, catalyzes the interconversion of 2-phosphoglycerate and 3-phosphoglycerate. The polypeptide is 2,3-bisphosphoglycerate-dependent phosphoglycerate mutase (Chlamydia trachomatis serovar L2b (strain UCH-1/proctitis)).